The primary structure comprises 928 residues: MKSQFSWLVLSSTLACFTSCSTVFAATAENIGPSDSFDGSTNTGTYTPKNTTTGIDYTLTGDITLQNLGDSAALTKGCFSDTTESLSFAGKGYSLSFLNIKSSAEGAALSVTTDKNLSLTGFSSLTFLAAPSSVITTPSGKGAVKCGGDLTFDNNGTILFKQDYCEENGGAISTKNLSLKNSTGSISFEGNKSSATGKKGGAICATGTVDITNNTAPTLFSNNIAEAAGGAINSTGNCTITGNTSLVFSENSVTATAGNGGALSGDADVTISGNQSVTFSGNQAVANGGAIYAKKLTLASGGGGGISFSNNIVQGTTAGNGGAISILAAGECSLSAEAGDITFNGNAIVATTPQTTKRNSIDIGSTAKITNLRAISGHSIFFYDPITANTAADSTDTLNLNKADAGNSTDYSGSIVFSGEKLSEDEAKVADNLTSTLKQPVTLTAGNLVLKRGVTLDTKGFTQTAGSSVIMDAGTTLKASTEEVTLTGLSIPVDSLGEGKKVVIAASAASKNVALSGPILLLDNQGNAYENHDLGKTQDFSFVQLSALGTATTTDVPAVPTVATPTHYGYQGTWGMTWVDDTASTPKTKTATLAWTNTGYLPNPERQGPLVPNSLWGSFSDIQAIQGVIERSALTLCSDRGFWAAGVANFLDKDKKGEKRKYRHKSGGYAIGGAAQTCSENLISFAFCQLFGSDKDFLVAKNHTDTYAGAFYIQHITECSGFIGCLLDKLPGSWSHKPLVLEGQLAYSHVSNDLKTKYTAYPEVKGSWGNNAFNMMLGASSHSYPEYLHCFDTYAPYIKLNLTYIRQDSFSEKGTEGRSFDDSNLFNLSLPIGVKFEKFSDCNDFSYDLTLSYVPDLIRNDPKCTTALVISGASWETYANNLARQALQVRAGSHYAFSPMFEVLGQFVFEVRGSSRIYNVDLGGKFQF.

A signal peptide spans 1–25 (MKSQFSWLVLSSTLACFTSCSTVFA). In terms of domain architecture, Autotransporter spans 635–928 (TLCSDRGFWA…NVDLGGKFQF (294 aa)).

Belongs to the PMP outer membrane protein family.

The protein resides in the secreted. Its subcellular location is the cell wall. The protein localises to the cell outer membrane. In Chlamydia pneumoniae (Chlamydophila pneumoniae), this protein is Probable outer membrane protein pmp10 (pmp10).